The chain runs to 82 residues: MKTSVVFVIAGLALLSVACYASELKEQSSINEVLSTIFHFEQPEERDCLGFMRKCIPDNDKCCRPNLVCSRTHKWCKYVFGK.

Residues 1-21 form the signal peptide; sequence MKTSVVFVIAGLALLSVACYA. Positions 22 to 46 are excised as a propeptide; that stretch reads SELKEQSSINEVLSTIFHFEQPEER. 3 disulfides stabilise this stretch: Cys48/Cys63, Cys55/Cys69, and Cys62/Cys76. Phenylalanine amide is present on Phe80.

It belongs to the neurotoxin 10 (Hwtx-1) family. 08 (Gtx1-15) subfamily. As to expression, expressed by the venom gland.

It localises to the secreted. In terms of biological role, potent voltage-gated sodium channel blocker. Potently inhibits the voltage-gated sodium channels Nav1.7/SCN9A (IC(50)=0.58-10 nM). Shows a moderate activity on Nav1.1/SCN1A (IC(50)=6 nM), Nav1.2/SCN2A (IC(50)=5-128 nM), Nav1.3/SCN3A (IC(50)=20.3-170 nM), and Nav1.6/SCN8A (IC(50)=17-20.1 nM). Shows an unclear inhibition of Nav1.4/SCN4A (IC(50)=200 nM to &gt;10 uM), Nav1.5/SCN5A (IC(50)=140 nM to &gt;10 uM) and Nav1.8/SCN10A (IC(50)=68-12200 nM). Weakly blocks the low voltage-gated calcium channels Cav3.1/CACNA1G (30% inhibition of the peak current by 9.8 nM of the toxin). It shows moderate affinity for lipid bilayers. The sequence is that of Toxin GTx1-15 from Grammostola rosea (Chilean rose tarantula).